Here is a 338-residue protein sequence, read N- to C-terminus: D-erythrose-4-phosphate dehydrogenase (338 aa).

12-13 (RI) lines the NAD(+) pocket. Substrate contacts are provided by residues 154–156 (SCT), R200, 213–214 (TK), and R236. The active-site Nucleophile is the C155. Residue N318 coordinates NAD(+).

Belongs to the glyceraldehyde-3-phosphate dehydrogenase family. Epd subfamily. In terms of assembly, homotetramer.

Its subcellular location is the cytoplasm. It catalyses the reaction D-erythrose 4-phosphate + NAD(+) + H2O = 4-phospho-D-erythronate + NADH + 2 H(+). It participates in cofactor biosynthesis; pyridoxine 5'-phosphate biosynthesis; pyridoxine 5'-phosphate from D-erythrose 4-phosphate: step 1/5. In terms of biological role, catalyzes the NAD-dependent conversion of D-erythrose 4-phosphate to 4-phosphoerythronate. This is D-erythrose-4-phosphate dehydrogenase from Tolumonas auensis (strain DSM 9187 / NBRC 110442 / TA 4).